Reading from the N-terminus, the 217-residue chain is Peptidyl-tRNA hydrolase (217 aa).

Residue Tyr14 participates in tRNA binding. The active-site Proton acceptor is the His19. Residues Tyr64, Asn66, and Asn113 each coordinate tRNA. The tract at residues 182–217 is disordered; it reads MNRINAPPPKPKREQKRSSDAPDSSSDTNTSNASDG. The segment covering 202–217 has biased composition (low complexity); it reads APDSSSDTNTSNASDG.

It belongs to the PTH family. Monomer.

It localises to the cytoplasm. The catalysed reaction is an N-acyl-L-alpha-aminoacyl-tRNA + H2O = an N-acyl-L-amino acid + a tRNA + H(+). Functionally, hydrolyzes ribosome-free peptidyl-tRNAs (with 1 or more amino acids incorporated), which drop off the ribosome during protein synthesis, or as a result of ribosome stalling. Catalyzes the release of premature peptidyl moieties from peptidyl-tRNA molecules trapped in stalled 50S ribosomal subunits, and thus maintains levels of free tRNAs and 50S ribosomes. The polypeptide is Peptidyl-tRNA hydrolase (Roseiflexus sp. (strain RS-1)).